Here is a 295-residue protein sequence, read N- to C-terminus: Methionine aminopeptidase (295 aa).

His-62 provides a ligand contact to substrate. Positions 82, 93, and 153 each coordinate a divalent metal cation. Position 161 (His-161) interacts with substrate. Glu-187 and Glu-280 together coordinate a divalent metal cation.

As to quaternary structure, monomer. It depends on Co(2+) as a cofactor. The cofactor is Zn(2+). Mn(2+) serves as cofactor. Fe(2+) is required as a cofactor.

The catalysed reaction is Release of N-terminal amino acids, preferentially methionine, from peptides and arylamides.. Its function is as follows. Removes the N-terminal methionine from nascent proteins. The N-terminal methionine is often cleaved when the second residue in the primary sequence is small and uncharged (Met-Ala-, Cys, Gly, Pro, Ser, Thr, or Val). In Pyrococcus furiosus (strain ATCC 43587 / DSM 3638 / JCM 8422 / Vc1), this protein is Methionine aminopeptidase.